Here is a 103-residue protein sequence, read N- to C-terminus: Large ribosomal subunit protein uL24 (103 aa).

The protein belongs to the universal ribosomal protein uL24 family. In terms of assembly, part of the 50S ribosomal subunit.

Functionally, one of two assembly initiator proteins, it binds directly to the 5'-end of the 23S rRNA, where it nucleates assembly of the 50S subunit. In terms of biological role, one of the proteins that surrounds the polypeptide exit tunnel on the outside of the subunit. This Listeria monocytogenes serotype 4a (strain HCC23) protein is Large ribosomal subunit protein uL24.